A 1253-amino-acid chain; its full sequence is Cytoplasmic FMR1-interacting protein 2 (1253 aa).

This sequence belongs to the CYFIP family.

It is found in the cytoplasm. Involved in T-cell adhesion and p53-dependent induction of apoptosis. Does not bind RNA. In Xenopus laevis (African clawed frog), this protein is Cytoplasmic FMR1-interacting protein 2 (cyfip2).